The sequence spans 273 residues: Zinc finger protein 80 (273 aa).

2 C2H2-type zinc fingers span residues 49-71 and 77-99; these read YKCK…HQIH and YECQ…MRIH. The C2H2-type 3; atypical zinc-finger motif lies at 105-127; it reads CKCVECGKVFNRRSHLLCYRQIH. C2H2-type zinc fingers lie at residues 133–155, 161–183, 189–211, and 217–239; these read YECS…RMTH, FGCK…MKIH, YKCG…SMTH, and YECK…TRSH.

It belongs to the krueppel C2H2-type zinc-finger protein family.

The protein localises to the nucleus. May be involved in transcriptional regulation. This chain is Zinc finger protein 80 (ZNF80), found in Gorilla gorilla gorilla (Western lowland gorilla).